Here is a 424-residue protein sequence, read N- to C-terminus: Exodeoxyribonuclease 7 large subunit (424 aa).

It belongs to the XseA family. In terms of assembly, heterooligomer composed of large and small subunits.

Its subcellular location is the cytoplasm. It carries out the reaction Exonucleolytic cleavage in either 5'- to 3'- or 3'- to 5'-direction to yield nucleoside 5'-phosphates.. Functionally, bidirectionally degrades single-stranded DNA into large acid-insoluble oligonucleotides, which are then degraded further into small acid-soluble oligonucleotides. This chain is Exodeoxyribonuclease 7 large subunit, found in Cyanothece sp. (strain PCC 7425 / ATCC 29141).